We begin with the raw amino-acid sequence, 532 residues long: Hepatocyte nuclear factor 1-beta-B (532 aa).

The segment at 1–35 (MFTDMVSKLTSLQQELLSALLDSGVTKDVLVQALE) is dimerization. Positions 5-36 (MVSKLTSLQQELLSALLDSGVTKDVLVQALED) constitute an HNF-p1 domain. The segment at 74 to 95 (TGAQGKGGKLSGDEGSEDGDDF) is disordered. The POU-specific atypical domain occupies 102 to 197 (RELQSLNTEE…IDRQFDRVQG (96 aa)). Gly residues predominate over residues 222–231 (SSGAAGGSGA). Disordered stretches follow at residues 222 to 245 (SSGA…KRMR) and 500 to 532 (EAGQ…LQAW). The homeobox; HNF1-type DNA-binding region spans 244–324 (MRRNRFKWGP…NRRKEEAFRQ (81 aa)). A compositionally biased stretch (polar residues) spans 505 to 532 (SHPSRYSTMDSSTITHLGSSKQCPLQAW).

The protein belongs to the HNF1 homeobox family. In terms of assembly, binds DNA as a dimer. Can form homodimer or heterodimer with HNF1-alpha. First expressed at stage 10 in the intermediate mesoderm. Expressed in rhombomere r5 by 14 hpf with expression diminishing by 18 hpf.

It is found in the nucleus. Transcription factor that binds to the inverted palindrome 5'-GTTAATNATTAAC-3'. Acts downstream of hnf1ba but is not required for induction of rhombomere r5/r6 gene expression in the hindbrain. The sequence is that of Hepatocyte nuclear factor 1-beta-B from Danio rerio (Zebrafish).